Here is a 77-residue protein sequence, read N- to C-terminus: U9-lycotoxin-Ls1a (77 aa).

Positions 1-20 are cleaved as a signal peptide; it reads MKLLLFTALVLVVIVSLIEA. The propeptide occupies 21 to 26; sequence EAENER.

It belongs to the neurotoxin 19 (CSTX) family. 08 (U8-Lctx) subfamily. Post-translationally, contains 4 disulfide bonds. In terms of tissue distribution, expressed by the venom gland.

The protein resides in the secreted. In Lycosa singoriensis (Wolf spider), this protein is U9-lycotoxin-Ls1a.